Consider the following 328-residue polypeptide: Peroxidase 25 (328 aa).

The N-terminal stretch at 1 to 26 is a signal peptide; the sequence is MGVYLGKYCYIMIIMLVLVLGKEVRS. Cystine bridges form between Cys-38–Cys-114, Cys-71–Cys-76, Cys-120–Cys-324, and Cys-198–Cys-230. The active-site Proton acceptor is His-69. Ca(2+) contacts are provided by Asp-70, Val-73, Gly-75, Asp-77, and Ser-79. Substrate is bound at residue Pro-161. His-191 serves as a coordination point for heme b. Ca(2+) is bound at residue Thr-192. An N-linked (GlcNAc...) asparagine glycan is attached at Asn-207. Asp-243, Ser-246, and Asp-251 together coordinate Ca(2+).

Belongs to the peroxidase family. Classical plant (class III) peroxidase subfamily. Heme b is required as a cofactor. The cofactor is Ca(2+).

The protein resides in the secreted. The catalysed reaction is 2 a phenolic donor + H2O2 = 2 a phenolic radical donor + 2 H2O. Functionally, removal of H(2)O(2), oxidation of toxic reductants, biosynthesis and degradation of lignin, suberization, auxin catabolism, response to environmental stresses such as wounding, pathogen attack and oxidative stress. These functions might be dependent on each isozyme/isoform in each plant tissue. This chain is Peroxidase 25 (PER25), found in Arabidopsis thaliana (Mouse-ear cress).